Here is a 116-residue protein sequence, read N- to C-terminus: Appetite-regulating hormone (116 aa).

Residues 1-23 form the signal peptide; that stretch reads MPAPRTICSLLLLSMLWMDLAMA. S26 is lipidated: O-decanoyl serine; alternate. Residue S26 is the site of O-hexanoyl serine; alternate attachment. The O-octanoyl serine; alternate moiety is linked to residue S26. The disordered stretch occupies residues 29–67; sequence SPEHQKLQRKEPKKPSGRLKPRALEGQFDPDVGSQEEGA. The segment covering 31 to 42 has biased composition (basic and acidic residues); it reads EHQKLQRKEPKK. A propeptide spans 51–74 (removed in mature form); it reads ALEGQFDPDVGSQEEGAEDELEIR. L97 is modified (leucine amide). Positions 98-116 are cleaved as a propeptide — removed in mature form; sequence GKFLQDILWEEAEETLADE.

It belongs to the motilin family. In terms of processing, O-octanoylated by GOAT/MBOAT4. O-octanoylation is essential for ghrelin activity. Amidation of Leu-97 is essential for obestatin activity.

The protein resides in the secreted. Ghrelin is the ligand for growth hormone secretagogue receptor type 1 (GHSR). Induces the release of growth hormone from the pituitary. Has an appetite-stimulating effect, induces adiposity and stimulates gastric acid secretion. Involved in growth regulation. In terms of biological role, obestatin may be the ligand for GPR39. May have an appetite-reducing effect resulting in decreased food intake. May reduce gastric emptying activity and jejunal motility. The sequence is that of Appetite-regulating hormone (GHRL) from Capra hircus (Goat).